The chain runs to 295 residues: Pyridoxal 5'-phosphate synthase subunit PdxS (295 aa).

Aspartate 25 provides a ligand contact to D-ribose 5-phosphate. Catalysis depends on lysine 82, which acts as the Schiff-base intermediate with D-ribose 5-phosphate. Glycine 154 lines the D-ribose 5-phosphate pocket. Arginine 166 provides a ligand contact to D-glyceraldehyde 3-phosphate. D-ribose 5-phosphate is bound by residues glycine 215 and 236-237 (GS).

It belongs to the PdxS/SNZ family. In terms of assembly, in the presence of PdxT, forms a dodecamer of heterodimers.

The catalysed reaction is aldehydo-D-ribose 5-phosphate + D-glyceraldehyde 3-phosphate + L-glutamine = pyridoxal 5'-phosphate + L-glutamate + phosphate + 3 H2O + H(+). It functions in the pathway cofactor biosynthesis; pyridoxal 5'-phosphate biosynthesis. Its function is as follows. Catalyzes the formation of pyridoxal 5'-phosphate from ribose 5-phosphate (RBP), glyceraldehyde 3-phosphate (G3P) and ammonia. The ammonia is provided by the PdxT subunit. Can also use ribulose 5-phosphate and dihydroxyacetone phosphate as substrates, resulting from enzyme-catalyzed isomerization of RBP and G3P, respectively. This Bacillus mycoides (strain KBAB4) (Bacillus weihenstephanensis) protein is Pyridoxal 5'-phosphate synthase subunit PdxS.